The chain runs to 345 residues: MITIVSTENDALSAQLAAAINNKTKPLGSLGMLETLARQIGLIQQTTQAQIIDPALIVFAADHGIVAENVSAYPQSVTWQMVENFLAGGAAINVFARQNHCALHIVDAGVNHDFGRREGLLDRKVAYGTRNFAQETAMSAEQCAQAVQAGMDLAAGIKGNVLGFGEMGIGNTTAAAAIMQAMTKLPAAECVGAGTGLAHEGILHKQKVVQDAVAYHAAIVAKNAPLDILATFGGFEIAMIVGAMLKAAERRMVLLIDGFIITSALMIAARLQPSILDYCVFAHCSDEHGHRQMISHLGGRPVLQMGLRLGEGTGSVLALPLLHAAVNFLREMATFESADVSQQNA.

Glutamate 311 acts as the Proton acceptor in catalysis.

Belongs to the CobT family.

The catalysed reaction is 5,6-dimethylbenzimidazole + nicotinate beta-D-ribonucleotide = alpha-ribazole 5'-phosphate + nicotinate + H(+). It functions in the pathway nucleoside biosynthesis; alpha-ribazole biosynthesis; alpha-ribazole from 5,6-dimethylbenzimidazole: step 1/2. Its function is as follows. Catalyzes the synthesis of alpha-ribazole-5'-phosphate from nicotinate mononucleotide (NAMN) and 5,6-dimethylbenzimidazole (DMB). This chain is Nicotinate-nucleotide--dimethylbenzimidazole phosphoribosyltransferase, found in Janthinobacterium sp. (strain Marseille) (Minibacterium massiliensis).